A 247-amino-acid chain; its full sequence is Carbonic anhydrase (247 aa).

Residues 1–34 (MMFNKQIFTILILSLSLALAGSGCISEGAEDNVA) form the signal peptide. Position 93 to 95 (93 to 95 (RSD)) interacts with substrate. The active-site Proton donor/acceptor is Glu-96. Substrate is bound at residue 109 to 110 (QD). His-115 contacts Zn(2+). Glu-118 is an active-site residue. Residues His-151 and His-156 each coordinate Zn(2+). Position 236 (Asn-236) interacts with substrate.

This sequence belongs to the gamma-class carbonic anhydrase family. Homotrimer. Requires Zn(2+) as cofactor.

The protein resides in the secreted. The enzyme catalyses hydrogencarbonate + H(+) = CO2 + H2O. In terms of biological role, reversible hydration of carbon dioxide. Important for growth on acetate. As a probably extracellular enzyme, it may support a H(+)/CH(3)COO(-) symport mechanism and/or conversion of CO(2) to HCO(3)(-), removing excess CO(2) produced by growth on acetate. The protein is Carbonic anhydrase of Methanosarcina thermophila (strain ATCC 43570 / DSM 1825 / OCM 12 / VKM B-1830 / TM-1).